The following is a 96-amino-acid chain: C-C motif chemokine 20 (96 aa).

Positions 1-26 (MCCTKSLLLAALMSVLLLHLCGESEA) are cleaved as a signal peptide. Cystine bridges form between C32–C58 and C33–C74.

This sequence belongs to the intercrine beta (chemokine CC) family. In terms of processing, C-terminal processed forms which lack 1, 3 or 6 amino acids are produced by proteolytic cleavage after secretion from peripheral blood monocytes. In terms of tissue distribution, expressed in the seminal plasma, endometrial fluid and follicular fluid (at protein level). Expressed predominantly in the liver, lymph nodes, appendix, peripheral blood lymphocytes, and fetal lung. Low levels seen in thymus, prostate, testis, small intestine and colon.

The protein localises to the secreted. Functionally, acts as a ligand for C-C chemokine receptor CCR6. Signals through binding and activation of CCR6 and induces a strong chemotactic response and mobilization of intracellular calcium ions. The ligand-receptor pair CCL20-CCR6 is responsible for the chemotaxis of dendritic cells (DC), effector/memory T-cells and B-cells and plays an important role at skin and mucosal surfaces under homeostatic and inflammatory conditions, as well as in pathology, including cancer and various autoimmune diseases. CCL20 acts as a chemotactic factor that attracts lymphocytes and, slightly, neutrophils, but not monocytes. Involved in the recruitment of both the pro-inflammatory IL17 producing helper T-cells (Th17) and the regulatory T-cells (Treg) to sites of inflammation. Required for optimal migration of thymic natural regulatory T cells (nTregs) and DN1 early thymocyte progenitor cells. C-terminal processed forms have been shown to be equally chemotactically active for leukocytes. Positively regulates sperm motility and chemotaxis via its binding to CCR6 which triggers Ca2+ mobilization in the sperm which is important for its motility. Inhibits proliferation of myeloid progenitors in colony formation assays. May be involved in formation and function of the mucosal lymphoid tissues by attracting lymphocytes and dendritic cells towards epithelial cells. Possesses antibacterial activity towards E.coli ATCC 25922 and S.aureus ATCC 29213. The chain is C-C motif chemokine 20 (CCL20) from Homo sapiens (Human).